Reading from the N-terminus, the 139-residue chain is S-protein homolog 14 (139 aa).

The first 20 residues, 1–20, serve as a signal peptide directing secretion; sequence MNRFIIFMFVVVTYFGLNVA. N136 carries an N-linked (GlcNAc...) asparagine glycan.

This sequence belongs to the plant self-incompatibility (S1) protein family.

Its subcellular location is the secreted. This Arabidopsis thaliana (Mouse-ear cress) protein is S-protein homolog 14.